A 216-amino-acid chain; its full sequence is MNLILMGLPGAGKGTQAEQIVAKYNIPHISTGDMFRAAMKAETELGLQAKSFIDKGALVPDEVTIGIVRERLSQEDCKKGFLLDGFPRTVAQASALEEIMKDLGKKIDYVLNINVDSGLLLKRLTGRRICKECGATYHLEFNPPAKADVCDKCGGELYQRSDDNEETVANRLEVNIKQTKPLLDFYEELGYLQSINGEQDINKVFADIDVLIGGLA.

10 to 15 (GAGKGT) provides a ligand contact to ATP. The tract at residues 30 to 59 (STGDMFRAAMKAETELGLQAKSFIDKGALV) is NMP. AMP-binding positions include T31, R36, 57-59 (ALV), 85-88 (GFPR), and Q92. The interval 126–163 (GRRICKECGATYHLEFNPPAKADVCDKCGGELYQRSDD) is LID. R127 serves as a coordination point for ATP. The Zn(2+) site is built by C130 and C133. Residue 136–137 (TY) participates in ATP binding. Zn(2+)-binding residues include C150 and C153. 2 residues coordinate AMP: R160 and R171. Residue Q199 participates in ATP binding.

It belongs to the adenylate kinase family. In terms of assembly, monomer.

The protein localises to the cytoplasm. The catalysed reaction is AMP + ATP = 2 ADP. Its pathway is purine metabolism; AMP biosynthesis via salvage pathway; AMP from ADP: step 1/1. Catalyzes the reversible transfer of the terminal phosphate group between ATP and AMP. Plays an important role in cellular energy homeostasis and in adenine nucleotide metabolism. The sequence is that of Adenylate kinase from Bacillus cytotoxicus (strain DSM 22905 / CIP 110041 / 391-98 / NVH 391-98).